Here is a 249-residue protein sequence, read N- to C-terminus: Gamma-glutamyl peptidase 3 (249 aa).

The Glutamine amidotransferase type-1 domain occupies S19–M217. The Nucleophile role is filled by C103. Residues H196 and E198 contribute to the active site.

Belongs to the peptidase C26 family.

It localises to the cytoplasm. The protein resides in the cytosol. It catalyses the reaction an S-[(1E)-1-(hydroxyimino)-omega-(methylsulfanyl)alkyl]-L-glutathione + H2O = an S-[(1E)-1-(hydroxyimino)-omega-(methylsulfanyl)alkyl]-L-cysteinylglycine + L-glutamate. It carries out the reaction (E)-1-(glutathione-S-yl)-2-(1H-indol-3-yl)acetohydroximate + H2O = (E)-1-(glycyl-L-cystein-S-yl)-2-(1H-indol-3-yl)acetohydroximate + L-glutamate. The enzyme catalyses 2-(glutathion-S-yl)-2-(1H-indol-3-yl)acetonitrile + H2O = 2-(glycyl-L-cystein-S-yl)-2-(1H-indol-3-yl)acetonitrile + L-glutamate. The catalysed reaction is (Z)-1-(glutathione-S-yl)-2-phenylacetohydroximate + H2O = (Z)-1-(glycyl-L-cystein-S-yl)-2-phenylacetohydroximate + L-glutamate. The protein operates within secondary metabolite biosynthesis. Involved in glucosinolate biosynthesis. Hydrolyzes the gamma-glutamyl peptide bond of several glutathione (GSH) conjugates to produce Cys-Gly conjugates related to glucosinolates. The gamma-Glu-Cys-Gly-GSH conjugates are the sulfur-donating molecule in glucosinolate biosynthesis. Can use the GSH conjugate of the camalexin intermediate IAN (GS-IAN) as substrate. Required for the biosynthesis of camalexin, a pathogen-inducible phytoalexin with antibacterial and antifungal properties. In Arabidopsis thaliana (Mouse-ear cress), this protein is Gamma-glutamyl peptidase 3.